We begin with the raw amino-acid sequence, 177 residues long: Adenine phosphoribosyltransferase (177 aa).

Belongs to the purine/pyrimidine phosphoribosyltransferase family. As to quaternary structure, homodimer.

It is found in the cytoplasm. It carries out the reaction AMP + diphosphate = 5-phospho-alpha-D-ribose 1-diphosphate + adenine. It participates in purine metabolism; AMP biosynthesis via salvage pathway; AMP from adenine: step 1/1. Its function is as follows. Catalyzes a salvage reaction resulting in the formation of AMP, that is energically less costly than de novo synthesis. This is Adenine phosphoribosyltransferase from Acidothermus cellulolyticus (strain ATCC 43068 / DSM 8971 / 11B).